Reading from the N-terminus, the 439-residue chain is ATP-dependent protease ATPase subunit HslU (439 aa).

ATP contacts are provided by residues isoleucine 17, 59–64, aspartate 251, glutamate 317, and arginine 389; that span reads GVGKTE.

This sequence belongs to the ClpX chaperone family. HslU subfamily. As to quaternary structure, a double ring-shaped homohexamer of HslV is capped on each side by a ring-shaped HslU homohexamer. The assembly of the HslU/HslV complex is dependent on binding of ATP.

The protein localises to the cytoplasm. ATPase subunit of a proteasome-like degradation complex; this subunit has chaperone activity. The binding of ATP and its subsequent hydrolysis by HslU are essential for unfolding of protein substrates subsequently hydrolyzed by HslV. HslU recognizes the N-terminal part of its protein substrates and unfolds these before they are guided to HslV for hydrolysis. This chain is ATP-dependent protease ATPase subunit HslU, found in Campylobacter jejuni (strain RM1221).